The sequence spans 83 residues: Sec-independent protein translocase protein TatA (83 aa).

Residues 2–22 (GLGGISIWQLLIVLVIVLLLF) traverse the membrane as a helical segment. Basic and acidic residues-rich tracts occupy residues 50–65 (AAKQ…KVAA) and 74–83 (AEQKEKTEAK). Residues 50–83 (AAKQEAEEAEQKKVAAEEAAAAKTAEQKEKTEAK) are disordered.

This sequence belongs to the TatA/E family. In terms of assembly, the Tat system comprises two distinct complexes: a TatABC complex, containing multiple copies of TatA, TatB and TatC subunits, and a separate TatA complex, containing only TatA subunits. Substrates initially bind to the TatABC complex, which probably triggers association of the separate TatA complex to form the active translocon.

The protein resides in the cell inner membrane. Functionally, part of the twin-arginine translocation (Tat) system that transports large folded proteins containing a characteristic twin-arginine motif in their signal peptide across membranes. TatA could form the protein-conducting channel of the Tat system. The polypeptide is Sec-independent protein translocase protein TatA (Saccharophagus degradans (strain 2-40 / ATCC 43961 / DSM 17024)).